We begin with the raw amino-acid sequence, 414 residues long: Glutamyl-tRNA reductase (414 aa).

Substrate is bound by residues 48-51, Ser-104, 109-111, and Gln-115; these read TCNR and EAQ. Cys-49 (nucleophile) is an active-site residue. 184-189 lines the NADP(+) pocket; that stretch reads GAGEMI.

Belongs to the glutamyl-tRNA reductase family. Homodimer.

It carries out the reaction (S)-4-amino-5-oxopentanoate + tRNA(Glu) + NADP(+) = L-glutamyl-tRNA(Glu) + NADPH + H(+). It functions in the pathway porphyrin-containing compound metabolism; protoporphyrin-IX biosynthesis; 5-aminolevulinate from L-glutamyl-tRNA(Glu): step 1/2. In terms of biological role, catalyzes the NADPH-dependent reduction of glutamyl-tRNA(Glu) to glutamate 1-semialdehyde (GSA). The polypeptide is Glutamyl-tRNA reductase (Methylobacillus flagellatus (strain ATCC 51484 / DSM 6875 / VKM B-1610 / KT)).